Here is a 248-residue protein sequence, read N- to C-terminus: Mannose-binding protein C (248 aa).

An N-terminal signal peptide occupies residues 1 to 20; that stretch reads MSLFPSLPLLLLSMVAASYS. Positions 42-99 constitute a Collagen-like domain; the sequence is GINGFPGKDGRDGTKGEKGEPGQGLRGLQGPPGKLGPPGNPGPSGSPGPKGQKGDPGK. A disordered region spans residues 43 to 113; sequence INGFPGKDGR…DSSLAASERK (71 aa). Hydroxyproline is present on Pro47. Over residues 49–61 the composition is skewed to basic and acidic residues; sequence KDGRDGTKGEKGE. Residues Pro73, Pro79, Pro82, and Pro88 each carry the hydroxyproline modification. The segment covering 75–87 has biased composition (pro residues); sequence KLGPPGNPGPSGS. Basic and acidic residues predominate over residues 93–102; that stretch reads QKGDPGKSPD. Positions 112 to 130 form a coiled coil; it reads RKALQTEMARIKKWLTFSL. The 112-residue stretch at 134 to 245 folds into the C-type lectin domain; that stretch reads VGNKFFLTNG…CSTSHLAVCE (112 aa). Cystine bridges form between Cys155–Cys244 and Cys222–Cys236.

As to quaternary structure, oligomeric complex of 3 or more homotrimers. Interacts with MASP1 and MASP2. Interacts with MEP1A and MEP1B and may inhibit their catalytic activity. Interacts with CR1 (via Sushi 24 and Sushi 25 domains). In terms of assembly, (Microbial infection) Interacts with SARS coronavirus-2/SARS-CoV-2 Spike glycoprotein homotrimer; the interaction is calcium-dependent and modulated by Spike glycoprotein glycosylation state. As to expression, plasma protein produced mainly in the liver.

The protein resides in the secreted. Functionally, calcium-dependent lectin involved in innate immune defense. Binds mannose, fucose and N-acetylglucosamine on different microorganisms and activates the lectin complement pathway. Binds to late apoptotic cells, as well as to apoptotic blebs and to necrotic cells, but not to early apoptotic cells, facilitating their uptake by macrophages. May bind DNA. Upon SARS coronavirus-2/SARS-CoV-2 infection, activates the complement lectin pathway which leads to the inhibition SARS-CoV-2 infection and a reduction of the induced inflammatory response. The sequence is that of Mannose-binding protein C from Homo sapiens (Human).